The following is a 79-amino-acid chain: Conotoxin Vi6.9 (79 aa).

An N-terminal signal peptide occupies residues 1–22 (MKLTCMVIITVLFLTASQLITA). Residues 23 to 47 (DYSRDQRQYRAVRLGDEMRNFKGAR) constitute a propeptide that is removed on maturation. 3 disulfide bridges follow: Cys49/Cys62, Cys56/Cys67, and Cys61/Cys77. Pro60 and Pro63 each carry 4-hydroxyproline.

This sequence belongs to the conotoxin O1 superfamily. Expressed by the venom duct.

It localises to the secreted. In terms of biological role, ion channel inhibitor that inhibits the increase in intracellular calcium upon depolarization in DRG neurons. In vivo, both intraperitoneal and intracranial injections into mice induce hyperactivity. In Conus virgo (Virgin cone), this protein is Conotoxin Vi6.9.